The sequence spans 125 residues: Translation initiation factor 5A (125 aa).

Lys35 bears the Hypusine mark.

The protein belongs to the eIF-5A family.

Its subcellular location is the cytoplasm. In terms of biological role, functions by promoting the formation of the first peptide bond. The protein is Translation initiation factor 5A (eIF5A) of Methanoregula boonei (strain DSM 21154 / JCM 14090 / 6A8).